The chain runs to 202 residues: LexA repressor (202 aa).

Residues 27 to 47 constitute a DNA-binding region (H-T-H motif); sequence RAEIAAELGFRSANAAEEHLR. Active-site for autocatalytic cleavage activity residues include Ser-119 and Lys-156.

The protein belongs to the peptidase S24 family. In terms of assembly, homodimer.

It catalyses the reaction Hydrolysis of Ala-|-Gly bond in repressor LexA.. Its function is as follows. Represses a number of genes involved in the response to DNA damage (SOS response), including recA and lexA. In the presence of single-stranded DNA, RecA interacts with LexA causing an autocatalytic cleavage which disrupts the DNA-binding part of LexA, leading to derepression of the SOS regulon and eventually DNA repair. In Marinobacter nauticus (strain ATCC 700491 / DSM 11845 / VT8) (Marinobacter aquaeolei), this protein is LexA repressor.